The sequence spans 126 residues: Heterotrimeric G protein gamma subunit GPG1 (126 aa).

As to quaternary structure, g proteins are composed of 3 units, alpha, beta and gamma. GPG1 interacts with the beta subunits GBP1 and GPB2.

Its subcellular location is the cytoplasm. Its function is as follows. Gamma subunit of a guanine nucleotide-binding protein (G protein). G proteins are involved as modulators or transducers in various transmembrane signaling systems. The beta and gamma chains are required for the GTPase activity, for replacement of GDP by GTP, and for G protein-effector interaction. Involved in the determination of the cAMP level according to nutritional conditions, most probably as a regulator of cAMP phosphodiesterase. Required for the control of pseudohyphal and haploid invasive growth. The chain is Heterotrimeric G protein gamma subunit GPG1 (GPG1) from Saccharomyces cerevisiae (strain ATCC 204508 / S288c) (Baker's yeast).